We begin with the raw amino-acid sequence, 152 residues long: Protein NrdI (152 aa).

The protein belongs to the NrdI family.

Probably involved in ribonucleotide reductase function. This is Protein NrdI from Mycolicibacterium vanbaalenii (strain DSM 7251 / JCM 13017 / BCRC 16820 / KCTC 9966 / NRRL B-24157 / PYR-1) (Mycobacterium vanbaalenii).